A 546-amino-acid polypeptide reads, in one-letter code: Intermembrane transport protein PqiB (546 aa).

Residues 1 to 15 (MESNNGEAKIQKVKN) lie on the Cytoplasmic side of the membrane. Residues 16 to 36 (WSPVWIFPIVTALIGAWVLFY) traverse the membrane as a helical segment. Residues 37–546 (HYSHQGPEVT…KDPEPKRAKQ (510 aa)) are Periplasmic-facing. MCE/MlaD stretches follow at residues 42–133 (GPEV…LQPG), 158–217 (IRVI…NNVR), and 285–389 (HIDY…LDFY). Positions 437-464 (IEQATSTLSESQRTMKNLQTTLDSMNKI) form a coiled coil.

It belongs to the PqiB family. Homohexamer. May form a complex composed of PqiA, PqiB and PqiC. Interacts with PqiC.

Its subcellular location is the cell inner membrane. Forms a tunnel that spans the entire periplasmic space. Could be implicated in lipid transport between the inner membrane and the outer membrane. Binds phospholipids. Required for outer membrane homeostasis. Contributes to membrane integrity. The protein is Intermembrane transport protein PqiB of Escherichia coli (strain K12).